A 135-amino-acid polypeptide reads, in one-letter code: Protein cornichon homolog 1 (135 aa).

Transmembrane regions (helical) follow at residues Val2 to Gln22, Phe51 to Leu71, and Ile111 to Leu131.

Belongs to the cornichon family. Interacts with HKT1;3.

The protein localises to the endoplasmic reticulum membrane. It is found in the golgi apparatus membrane. Acts as a cargo receptor necessary for the transportation of the cation transporter HKT1;3 and possibly other secretory proteins from the endoplasmic reticulum (ER) in COPII-coated vesicles targeted to the Golgi apparatus. The protein is Protein cornichon homolog 1 of Oryza sativa subsp. japonica (Rice).